We begin with the raw amino-acid sequence, 451 residues long: Glycosyltransferase-like At2g41451 (451 aa).

Positions 1-23 are cleaved as a signal peptide; sequence MASSDSSYSRKFLLITFLPLSLA. Residues asparagine 36, asparagine 137, asparagine 168, asparagine 441, and asparagine 444 are each glycosylated (N-linked (GlcNAc...) asparagine). A GT92 domain is found at 109-345; the sequence is QTLPWIFYHK…TYSKFSDLTS (237 aa).

This sequence belongs to the glycosyltransferase 92 family.

It localises to the secreted. Its subcellular location is the cell wall. The protein localises to the cytoplasm. The protein resides in the cell membrane. In terms of biological role, involved in the coordination between cell elongation and cellulose synthesis by promoting the expression of genes involved in cell elongation and cellulose synthesis. Acts as a regulator of plasmodesmatal permeability. Maybe a glycosyltransferase. This is Glycosyltransferase-like At2g41451 from Arabidopsis thaliana (Mouse-ear cress).